We begin with the raw amino-acid sequence, 130 residues long: Small ribosomal subunit protein uS9 (130 aa).

The protein belongs to the universal ribosomal protein uS9 family.

In Burkholderia ambifaria (strain MC40-6), this protein is Small ribosomal subunit protein uS9.